A 383-amino-acid polypeptide reads, in one-letter code: 1-deoxy-D-xylulose 5-phosphate reductoisomerase (383 aa).

NADPH-binding residues include T10, G11, S12, I13, and N123. K124 provides a ligand contact to 1-deoxy-D-xylulose 5-phosphate. NADPH is bound at residue E125. Residue D149 coordinates Mn(2+). Residues S150, E151, S175, and H198 each coordinate 1-deoxy-D-xylulose 5-phosphate. E151 lines the Mn(2+) pocket. G204 lines the NADPH pocket. The 1-deoxy-D-xylulose 5-phosphate site is built by S211, N216, K217, and E220. E220 contributes to the Mn(2+) binding site.

This sequence belongs to the DXR family. Requires Mg(2+) as cofactor. Mn(2+) is required as a cofactor.

It catalyses the reaction 2-C-methyl-D-erythritol 4-phosphate + NADP(+) = 1-deoxy-D-xylulose 5-phosphate + NADPH + H(+). It participates in isoprenoid biosynthesis; isopentenyl diphosphate biosynthesis via DXP pathway; isopentenyl diphosphate from 1-deoxy-D-xylulose 5-phosphate: step 1/6. Functionally, catalyzes the NADPH-dependent rearrangement and reduction of 1-deoxy-D-xylulose-5-phosphate (DXP) to 2-C-methyl-D-erythritol 4-phosphate (MEP). This chain is 1-deoxy-D-xylulose 5-phosphate reductoisomerase, found in Desulfosudis oleivorans (strain DSM 6200 / JCM 39069 / Hxd3) (Desulfococcus oleovorans).